A 288-amino-acid polypeptide reads, in one-letter code: 33 kDa chaperonin (288 aa).

Cystine bridges form between Cys-236-Cys-238 and Cys-269-Cys-272.

Belongs to the HSP33 family. In terms of processing, under oxidizing conditions two disulfide bonds are formed involving the reactive cysteines. Under reducing conditions zinc is bound to the reactive cysteines and the protein is inactive.

It localises to the cytoplasm. Redox regulated molecular chaperone. Protects both thermally unfolding and oxidatively damaged proteins from irreversible aggregation. Plays an important role in the bacterial defense system toward oxidative stress. The sequence is that of 33 kDa chaperonin from Syntrophotalea carbinolica (strain DSM 2380 / NBRC 103641 / GraBd1) (Pelobacter carbinolicus).